Reading from the N-terminus, the 446-residue chain is Histidine--tRNA ligase (446 aa).

This sequence belongs to the class-II aminoacyl-tRNA synthetase family. Homodimer.

It is found in the cytoplasm. It catalyses the reaction tRNA(His) + L-histidine + ATP = L-histidyl-tRNA(His) + AMP + diphosphate + H(+). This is Histidine--tRNA ligase from Burkholderia lata (strain ATCC 17760 / DSM 23089 / LMG 22485 / NCIMB 9086 / R18194 / 383).